We begin with the raw amino-acid sequence, 502 residues long: Glutamate--tRNA ligase (502 aa).

Positions 12 to 22 match the 'HIGH' region motif; that stretch reads PSPTGYLHVGG. Residues 259 to 263 carry the 'KMSKS' region motif; it reads KLSKR. Residue lysine 262 participates in ATP binding.

It belongs to the class-I aminoacyl-tRNA synthetase family. Glutamate--tRNA ligase type 1 subfamily. In terms of assembly, monomer.

It is found in the cytoplasm. The catalysed reaction is tRNA(Glu) + L-glutamate + ATP = L-glutamyl-tRNA(Glu) + AMP + diphosphate. In terms of biological role, catalyzes the attachment of glutamate to tRNA(Glu) in a two-step reaction: glutamate is first activated by ATP to form Glu-AMP and then transferred to the acceptor end of tRNA(Glu). The polypeptide is Glutamate--tRNA ligase (Pelodictyon phaeoclathratiforme (strain DSM 5477 / BU-1)).